We begin with the raw amino-acid sequence, 419 residues long: UDP-N-acetylglucosamine 1-carboxyvinyltransferase (419 aa).

A phosphoenolpyruvate-binding site is contributed by 22 to 23 (KN). R93 is a UDP-N-acetyl-alpha-D-glucosamine binding site. Catalysis depends on C117, which acts as the Proton donor. C117 bears the 2-(S-cysteinyl)pyruvic acid O-phosphothioketal mark. The UDP-N-acetyl-alpha-D-glucosamine site is built by D307 and I329.

This sequence belongs to the EPSP synthase family. MurA subfamily.

The protein localises to the cytoplasm. The catalysed reaction is phosphoenolpyruvate + UDP-N-acetyl-alpha-D-glucosamine = UDP-N-acetyl-3-O-(1-carboxyvinyl)-alpha-D-glucosamine + phosphate. It functions in the pathway cell wall biogenesis; peptidoglycan biosynthesis. Its function is as follows. Cell wall formation. Adds enolpyruvyl to UDP-N-acetylglucosamine. This is UDP-N-acetylglucosamine 1-carboxyvinyltransferase from Shewanella woodyi (strain ATCC 51908 / MS32).